The chain runs to 380 residues: Erythronate-4-phosphate dehydrogenase (380 aa).

Ser-45 and Thr-66 together coordinate substrate. Residues Asp-146, Thr-174, Ala-205–Arg-207, and Asp-231 each bind NAD(+). Residue Arg-207 is part of the active site. Glu-236 is an active-site residue. The active-site Proton donor is His-253. Gly-256 is an NAD(+) binding site. Tyr-257 contacts substrate.

The protein belongs to the D-isomer specific 2-hydroxyacid dehydrogenase family. PdxB subfamily. In terms of assembly, homodimer.

It localises to the cytoplasm. It catalyses the reaction 4-phospho-D-erythronate + NAD(+) = (R)-3-hydroxy-2-oxo-4-phosphooxybutanoate + NADH + H(+). The protein operates within cofactor biosynthesis; pyridoxine 5'-phosphate biosynthesis; pyridoxine 5'-phosphate from D-erythrose 4-phosphate: step 2/5. In terms of biological role, catalyzes the oxidation of erythronate-4-phosphate to 3-hydroxy-2-oxo-4-phosphonooxybutanoate. This chain is Erythronate-4-phosphate dehydrogenase, found in Pseudomonas putida (strain ATCC 700007 / DSM 6899 / JCM 31910 / BCRC 17059 / LMG 24140 / F1).